We begin with the raw amino-acid sequence, 202 residues long: MIGRLSGTLLEKHPPQILVDAGGVGYEVDVPMSTFCRLPGLNEPVVLWTHMAVREDAHLLFGFAGRAERELFRQLIRISGVGGKLALALLSSLEPDELARAVAQEDIKTLSRVPGIGKKTAERLILELRGKLGSLPSADLLSPAPAAGAALLVENDERADISQALQALGYSAREAEAALKSVPDGTDVATGIRLALKALARP.

Residues 1–64 (MIGRLSGTLL…EDAHLLFGFA (64 aa)) are domain I. The interval 65–143 (GRAERELFRQ…SLPSADLLSP (79 aa)) is domain II. The interval 144 to 152 (APAAGAALL) is flexible linker. Positions 153-202 (VENDERADISQALQALGYSAREAEAALKSVPDGTDVATGIRLALKALARP) are domain III.

This sequence belongs to the RuvA family. In terms of assembly, homotetramer. Forms an RuvA(8)-RuvB(12)-Holliday junction (HJ) complex. HJ DNA is sandwiched between 2 RuvA tetramers; dsDNA enters through RuvA and exits via RuvB. An RuvB hexamer assembles on each DNA strand where it exits the tetramer. Each RuvB hexamer is contacted by two RuvA subunits (via domain III) on 2 adjacent RuvB subunits; this complex drives branch migration. In the full resolvosome a probable DNA-RuvA(4)-RuvB(12)-RuvC(2) complex forms which resolves the HJ.

The protein resides in the cytoplasm. In terms of biological role, the RuvA-RuvB-RuvC complex processes Holliday junction (HJ) DNA during genetic recombination and DNA repair, while the RuvA-RuvB complex plays an important role in the rescue of blocked DNA replication forks via replication fork reversal (RFR). RuvA specifically binds to HJ cruciform DNA, conferring on it an open structure. The RuvB hexamer acts as an ATP-dependent pump, pulling dsDNA into and through the RuvAB complex. HJ branch migration allows RuvC to scan DNA until it finds its consensus sequence, where it cleaves and resolves the cruciform DNA. This chain is Holliday junction branch migration complex subunit RuvA, found in Laribacter hongkongensis (strain HLHK9).